The sequence spans 80 residues: Cell division protein ZapB (80 aa).

Positions 3–80 form a coiled coil; the sequence is FEVLEQLESK…ALLGKMDEVE (78 aa).

This sequence belongs to the ZapB family. Homodimer. The ends of the coiled-coil dimer bind to each other, forming polymers. Interacts with FtsZ.

The protein localises to the cytoplasm. Its function is as follows. Non-essential, abundant cell division factor that is required for proper Z-ring formation. It is recruited early to the divisome by direct interaction with FtsZ, stimulating Z-ring assembly and thereby promoting cell division earlier in the cell cycle. Its recruitment to the Z-ring requires functional FtsA or ZipA. This is Cell division protein ZapB from Vibrio parahaemolyticus serotype O3:K6 (strain RIMD 2210633).